The primary structure comprises 1584 residues: Cilia- and flagella-associated protein 74 (1584 aa).

Positions 300–379 (RKFQAWDRAK…EAEEEKRKKQ (80 aa)) form a coiled coil. Residues 692–706 (SEQQLEGTESSQADM) are compositionally biased toward polar residues. Residues 692–739 (SEQQLEGTESSQADMQSRKELEKLDKEQEEEQPAEPERLTTVIPPSEE) form a disordered region. Over residues 707 to 717 (QSRKELEKLDK) the composition is skewed to basic and acidic residues.

It belongs to the CFAP74 family.

The protein localises to the cytoplasm. Its subcellular location is the cytoskeleton. The protein resides in the cilium axoneme. It is found in the flagellum axoneme. As part of the central apparatus of the cilium axoneme may play a role in cilium movement. May play an important role in sperm architecture and function. This is Cilia- and flagella-associated protein 74 from Homo sapiens (Human).